Consider the following 257-residue polypeptide: S-methyl-5'-thioadenosine phosphorylase (257 aa).

Residues Ser10 and 50-51 each bind phosphate; that span reads RH. Residue Met180 participates in substrate binding. Thr181 lines the phosphate pocket. Position 204–206 (204–206) interacts with substrate; sequence DYD.

This sequence belongs to the PNP/MTAP phosphorylase family. MTAP subfamily. Homohexamer. Dimer of a homotrimer.

It carries out the reaction S-methyl-5'-thioadenosine + phosphate = 5-(methylsulfanyl)-alpha-D-ribose 1-phosphate + adenine. The protein operates within amino-acid biosynthesis; L-methionine biosynthesis via salvage pathway; S-methyl-5-thio-alpha-D-ribose 1-phosphate from S-methyl-5'-thioadenosine (phosphorylase route): step 1/1. In terms of biological role, catalyzes the reversible phosphorylation of S-methyl-5'-thioadenosine (MTA) to adenine and 5-methylthioribose-1-phosphate. Involved in the breakdown of MTA, a major by-product of polyamine biosynthesis. Responsible for the first step in the methionine salvage pathway after MTA has been generated from S-adenosylmethionine. Has broad substrate specificity with 6-aminopurine nucleosides as preferred substrates. This Pyrococcus horikoshii (strain ATCC 700860 / DSM 12428 / JCM 9974 / NBRC 100139 / OT-3) protein is S-methyl-5'-thioadenosine phosphorylase.